The chain runs to 306 residues: Lipoyl synthase (306 aa).

[4Fe-4S] cluster contacts are provided by Cys41, Cys46, Cys52, Cys68, Cys72, Cys75, and Ser281. The Radical SAM core domain maps to 54-270; the sequence is GARRTATFMI…RKVAMDKGFK (217 aa). Residues 283-306 are disordered; the sequence is HADEQVNEAAKEKHRLGEEKLQQN.

This sequence belongs to the radical SAM superfamily. Lipoyl synthase family. [4Fe-4S] cluster serves as cofactor.

It is found in the cytoplasm. The catalysed reaction is [[Fe-S] cluster scaffold protein carrying a second [4Fe-4S](2+) cluster] + N(6)-octanoyl-L-lysyl-[protein] + 2 oxidized [2Fe-2S]-[ferredoxin] + 2 S-adenosyl-L-methionine + 4 H(+) = [[Fe-S] cluster scaffold protein] + N(6)-[(R)-dihydrolipoyl]-L-lysyl-[protein] + 4 Fe(3+) + 2 hydrogen sulfide + 2 5'-deoxyadenosine + 2 L-methionine + 2 reduced [2Fe-2S]-[ferredoxin]. It functions in the pathway protein modification; protein lipoylation via endogenous pathway; protein N(6)-(lipoyl)lysine from octanoyl-[acyl-carrier-protein]. In terms of biological role, catalyzes the radical-mediated insertion of two sulfur atoms into the C-6 and C-8 positions of the octanoyl moiety bound to the lipoyl domains of lipoate-dependent enzymes, thereby converting the octanoylated domains into lipoylated derivatives. This Staphylococcus haemolyticus (strain JCSC1435) protein is Lipoyl synthase.